We begin with the raw amino-acid sequence, 593 residues long: MPPLGVLLLLVALGHSTQGHRPLPIRKAHKFDWWERGNFYQIYPRSFKDSDGDGIGDLKGITQTIDYLKTIGIDGVWLSPIFKSPMNDFGYDISDFYAIQEEYGTMEDFEELAAKCASIGLKLILDFVPNHSSDEHEHFRLSEEGIEPYKDYYIWHSGVLDANGTRHPPSNWISVFRGSAWQWSDKRQQYYLHQFQKKQPDLNYRNPALVEEMKNVMRFWLNKGIAGFRIDALPYLFESEEVDGHYRDEPLSGQATDDPDNPAYLTHTETKDQPETYDMVHQWRQVVDEYTARDNFTRIILTEAYTAVQNMTRFYGTPAAPGAQIPFNFQLITLLTVNSTGRDFVNAVQSWTRAMPSGAIANWVLGNHDNSRIASRLGVARADLYNIALQTLPGIAVTYYGEEIAMVDQWISWNDTIDPAACNADPATYELYSRDPVRTPFQWSNGTNAGFSNASRTWLPVADGYRELNVAAQLAAPRSHLKTFMQLTAYRKRRLLAEGNFVLRTVGRDLVMYKRSVPGVGYVVVALNFGPEPATLPVASQFPGTGEHWLKVIASSLQAQPQAGTWINTRLYKLAPDSGIVLERLTGRNDLMT.

The signal sequence occupies residues 1-19; sequence MPPLGVLLLLVALGHSTQG. Ca(2+) is bound by residues Asp49, Asp51, Asp53, Ile55, Asp57, and Asn130. Asn130 and Asn163 each carry an N-linked (GlcNAc...) asparagine glycan. Positions 201, 235, 236, and 238 each coordinate Ca(2+). Residues Asn295, Asn310, Asn338, Asn414, Asn445, and Asn453 are each glycosylated (N-linked (GlcNAc...) asparagine). Position 338 (Asn338) interacts with N-acetyl-beta-D-glucosamine.

It belongs to the glycosyl hydrolase 13 family. Saliva (at protein level). Proximal lateral lobes of the salivary gland (at protein level).

Its subcellular location is the secreted. The catalysed reaction is Hydrolysis of terminal, non-reducing (1-&gt;4)-linked alpha-D-glucose residues with release of alpha-D-glucose.. Functions as a glucosidase that shows high activity toward sucrose, a major component of nectar. Assists the mosquito in its sugar-feeding capabilities. This is Salivary alpha-glucosidase from Anopheles gambiae (African malaria mosquito).